The sequence spans 123 residues: Large ribosomal subunit protein uL29 (123 aa).

This sequence belongs to the universal ribosomal protein uL29 family. As to quaternary structure, component of the large ribosomal subunit.

Its subcellular location is the cytoplasm. Component of the large ribosomal subunit. The ribosome is a large ribonucleoprotein complex responsible for the synthesis of proteins in the cell. The sequence is that of Large ribosomal subunit protein uL29 (rpl35) from Xenopus tropicalis (Western clawed frog).